A 64-amino-acid chain; its full sequence is MANAANMIKVEQIGSPIRRHHSQRATLVGLKLNKIGRVTELQDTPEVRGMIAKVQHLVRVVDEK.

Belongs to the universal ribosomal protein uL30 family. Part of the 50S ribosomal subunit.

This chain is Large ribosomal subunit protein uL30, found in Rhodopseudomonas palustris (strain HaA2).